Consider the following 234-residue polypeptide: tRNA (guanine-N(1)-)-methyltransferase (234 aa).

S-adenosyl-L-methionine is bound by residues Gly115 and 135–140 (VGDYIL).

The protein belongs to the RNA methyltransferase TrmD family. As to quaternary structure, homodimer.

It localises to the cytoplasm. It carries out the reaction guanosine(37) in tRNA + S-adenosyl-L-methionine = N(1)-methylguanosine(37) in tRNA + S-adenosyl-L-homocysteine + H(+). Functionally, specifically methylates guanosine-37 in various tRNAs. This Rickettsia akari (strain Hartford) protein is tRNA (guanine-N(1)-)-methyltransferase.